The sequence spans 98 residues: NADH-ubiquinone oxidoreductase chain 4L (98 aa).

The next 3 helical transmembrane spans lie at 1–21 (MPLI…GLLM), 29–49 (ALLC…LLAL), and 61–81 (IILL…LVMI).

It belongs to the complex I subunit 4L family. Core subunit of respiratory chain NADH dehydrogenase (Complex I) which is composed of 45 different subunits.

It localises to the mitochondrion inner membrane. The catalysed reaction is a ubiquinone + NADH + 5 H(+)(in) = a ubiquinol + NAD(+) + 4 H(+)(out). Functionally, core subunit of the mitochondrial membrane respiratory chain NADH dehydrogenase (Complex I) which catalyzes electron transfer from NADH through the respiratory chain, using ubiquinone as an electron acceptor. Part of the enzyme membrane arm which is embedded in the lipid bilayer and involved in proton translocation. The polypeptide is NADH-ubiquinone oxidoreductase chain 4L (MT-ND4L) (Kogia breviceps (Pygmy sperm whale)).